Consider the following 620-residue polypeptide: Glutathione-regulated potassium-efflux system protein KefC (620 aa).

12 consecutive transmembrane segments (helical) span residues 4-24, 26-46, 54-74, 90-110, 114-134, 149-169, 178-198, 218-238, 270-290, 294-314, 327-347, and 359-379; these read HTLMQALIYLGSAALIVPIAV, LGLGSVLGYLIAGCIIGPWGL, SILHFAEIGVVLMLFVIGLEL, GALQMVICGGLIGFFCMFLGL, VAELIGMTLALSSTAIAMQAM, FAVLLFQDIAAIPLVAMIPLL, LGAFALSALKVAGALALVVLL, VFSAVALFLVFGFGLLLEEVG, GLLLGLFFIGVGMSIDFGTLV, LRILLLLAGFLAIKIVMLWLI, WFAVLLGQGSEFAFVVFGAAQ, and ALTLAVALSMAATPIFLVLLT. Residues 399–518 enclose the RCK N-terminal domain; it reads QPRVIVAGFG…AGVAMPERET (120 aa). The interval 599–620 is disordered; the sequence is QGTAEGKHTGDIADEPQVKPST.

The protein belongs to the monovalent cation:proton antiporter 2 (CPA2) transporter (TC 2.A.37) family. KefC subfamily. As to quaternary structure, homodimer. Interacts with the regulatory subunit KefF.

It localises to the cell inner membrane. Pore-forming subunit of a potassium efflux system that confers protection against electrophiles. Catalyzes K(+)/H(+) antiport. This Salmonella arizonae (strain ATCC BAA-731 / CDC346-86 / RSK2980) protein is Glutathione-regulated potassium-efflux system protein KefC.